The chain runs to 261 residues: Probable membrane transporter protein XF_0764 (261 aa).

8 consecutive transmembrane segments (helical) span residues 6-26, 29-49, 78-98, 99-119, 150-170, 175-195, 205-225, and 239-259; these read LIVT…LGGG, ILAT…IAIG, VIFA…GMLI, DGQR…LLML, AASG…LIFA, TINA…ITTL, WTIA…GTLL, and VFGL…WASL.

This sequence belongs to the 4-toluene sulfonate uptake permease (TSUP) (TC 2.A.102) family.

It localises to the cell membrane. The protein is Probable membrane transporter protein XF_0764 of Xylella fastidiosa (strain 9a5c).